The chain runs to 459 residues: Ribulose bisphosphate carboxylase large chain (459 aa).

Lys-4 is subject to N6,N6,N6-trimethyllysine. Substrate-binding residues include Asn-113 and Thr-163. Lys-165 functions as the Proton acceptor in the catalytic mechanism. Lys-167 lines the substrate pocket. The Mg(2+) site is built by Lys-191, Asp-193, and Glu-194. Lys-191 is modified (N6-carboxylysine). His-284 serves as the catalytic Proton acceptor. The substrate site is built by Arg-285, His-317, and Ser-369.

It belongs to the RuBisCO large chain family. Type I subfamily. As to quaternary structure, heterohexadecamer of 8 large chains and 8 small chains; disulfide-linked. The disulfide link is formed within the large subunit homodimers. Mg(2+) serves as cofactor. In terms of processing, the disulfide bond which can form in the large chain dimeric partners within the hexadecamer appears to be associated with oxidative stress and protein turnover.

The protein localises to the plastid. It localises to the chloroplast. The enzyme catalyses 2 (2R)-3-phosphoglycerate + 2 H(+) = D-ribulose 1,5-bisphosphate + CO2 + H2O. It catalyses the reaction D-ribulose 1,5-bisphosphate + O2 = 2-phosphoglycolate + (2R)-3-phosphoglycerate + 2 H(+). In terms of biological role, ruBisCO catalyzes two reactions: the carboxylation of D-ribulose 1,5-bisphosphate, the primary event in carbon dioxide fixation, as well as the oxidative fragmentation of the pentose substrate in the photorespiration process. Both reactions occur simultaneously and in competition at the same active site. This chain is Ribulose bisphosphate carboxylase large chain, found in Parnassia fimbriata (Fringed grass-of-Parnassus).